The following is a 710-amino-acid chain: Denticleless protein homolog A (710 aa).

3 WD repeats span residues 47–89, 96–135, and 138–178; these read GMPV…MQRL, AHTN…LIGE, and GHQC…KDGF. A DDB1-binding motif motif is present at residues 168 to 171; the sequence is WDTR. Positions 197–204 match the Nuclear localization signal motif; the sequence is PSKMKKRK. WD repeat units lie at residues 215–254, 270–309, 314–355, and 359–398; these read DSQQ…SAYR, TRKL…TDPV, GHQN…AAPV, and GHCQ…CEDS. The DDB1-binding motif motif lies at 244 to 247; it reads WDLR. Disordered regions lie at residues 428 to 534 and 652 to 698; these read GKPS…VSSA and ALGH…PGSM. Over residues 430 to 450 the composition is skewed to low complexity; that stretch reads PSVMSSSSLTSSPTPASCAPS. 2 stretches are compositionally biased toward polar residues: residues 504–516 and 659–690; these read TPKS…TKTP and SSPQ…SPVS.

Belongs to the WD repeat cdt2 family. As to quaternary structure, component of the DCX(DTL) E3 ubiquitin ligase complex, at least composed of cul4 (cul4a or cul4b), ddb1, dtl/cdt2 and rbx1.

It is found in the nucleus. The protein localises to the cytoplasm. It localises to the cytoskeleton. The protein resides in the microtubule organizing center. Its subcellular location is the centrosome. It is found in the chromosome. It functions in the pathway protein modification; protein ubiquitination. Its function is as follows. Substrate-specific adapter of a DCX (DDB1-CUL4-X-box) E3 ubiquitin-protein ligase complex required for cell cycle control, DNA damage response and translesion DNA synthesis. The DCX(DTL) complex, also named CRL4(CDT2) complex, mediates the polyubiquitination and subsequent degradation of CDT1, CDKN1A/p21(CIP1), KMT5A and SDE2. CDT1 degradation in response to DNA damage is necessary to ensure proper cell cycle regulation of DNA replication. CDKN1A/p21(CIP1) degradation during S phase or following UV irradiation is essential to control replication licensing. KMT5A degradation is also important for a proper regulation of mechanisms such as TGF-beta signaling, cell cycle progression, DNA repair and cell migration. Most substrates require their interaction with PCNA for their polyubiquitination: substrates interact with PCNA via their PIP-box, and those containing the 'K+4' motif in the PIP box, recruit the DCX(DTL) complex, leading to their degradation. In undamaged proliferating cells, the DCX(DTL) complex also promotes the 'Lys-164' monoubiquitination of PCNA, thereby being involved in PCNA-dependent translesion DNA synthesis. May play a role in the regulation of the circadian clock. This Xenopus laevis (African clawed frog) protein is Denticleless protein homolog A (dtl-a).